The primary structure comprises 305 residues: Orotidine 5'-phosphate decarboxylase (305 aa).

The active-site Proton donor is lysine 108.

It belongs to the OMP decarboxylase family. Type 2 subfamily.

It carries out the reaction orotidine 5'-phosphate + H(+) = UMP + CO2. Its pathway is pyrimidine metabolism; UMP biosynthesis via de novo pathway; UMP from orotate: step 2/2. This chain is Orotidine 5'-phosphate decarboxylase, found in Caldicellulosiruptor bescii (strain ATCC BAA-1888 / DSM 6725 / KCTC 15123 / Z-1320) (Anaerocellum thermophilum).